The following is a 199-amino-acid chain: Sulfocyanin (199 aa).

Residues 7–27 (VLPVVVGILVVIIAVAVGVYV) form a helical; Signal-anchor for type II membrane protein membrane-spanning segment. One can recognise a Plastocyanin-like domain in the interval 79 to 188 (NFNGTSSGSL…SGMWAVLVAS (110 aa)). Cu cation contacts are provided by His-110, Cys-171, His-176, and Met-181.

It belongs to the multicopper oxidase family.

The protein localises to the cell membrane. Functionally, the 4 redox proteins SoxE, SoxF, SoxG and SoxH probably form part of a membrane respiratory complex together with SoxM, a catalytic subunit of cytochrome oxidase. This is Sulfocyanin (soxE) from Sulfolobus acidocaldarius (strain ATCC 33909 / DSM 639 / JCM 8929 / NBRC 15157 / NCIMB 11770).